Here is a 443-residue protein sequence, read N- to C-terminus: tRNA modification GTPase MnmE (443 aa).

Residues Arg-23, Glu-81, and Lys-119 each coordinate (6S)-5-formyl-5,6,7,8-tetrahydrofolate. A TrmE-type G domain is found at Gly-214 to Ile-369. GTP is bound by residues Asn-224–Thr-229, Ser-243–Thr-249, and Asp-268–Gly-271. Residues Ser-228 and Thr-249 each contribute to the Mg(2+) site. Position 443 (Lys-443) interacts with (6S)-5-formyl-5,6,7,8-tetrahydrofolate.

Belongs to the TRAFAC class TrmE-Era-EngA-EngB-Septin-like GTPase superfamily. TrmE GTPase family. Homodimer. Heterotetramer of two MnmE and two MnmG subunits. K(+) is required as a cofactor.

It is found in the cytoplasm. Exhibits a very high intrinsic GTPase hydrolysis rate. Involved in the addition of a carboxymethylaminomethyl (cmnm) group at the wobble position (U34) of certain tRNAs, forming tRNA-cmnm(5)s(2)U34. In Anaplasma marginale (strain St. Maries), this protein is tRNA modification GTPase MnmE.